We begin with the raw amino-acid sequence, 310 residues long: uncharacterized protein (310 aa).

Topologically, residues methionine 1–alanine 6 are cytoplasmic. A PQ-loop 1 domain is found at lysine 5 to glutamine 69. Residues alanine 7 to isoleucine 27 traverse the membrane as a helical segment. At tyrosine 28–threonine 36 the chain is on the extracellular side. The helical transmembrane segment at glycine 37–phenylalanine 57 threads the bilayer. Topologically, residues cysteine 58 to lysine 61 are cytoplasmic. A helical transmembrane segment spans residues glycine 62–valine 82. Residues glutamine 83–lysine 96 are Extracellular-facing. Residues isoleucine 97–leucine 117 traverse the membrane as a helical segment. Residues tryptophan 118 to aspartate 131 are Cytoplasmic-facing. Residues leucine 132–glutamate 152 traverse the membrane as a helical segment. In terms of domain architecture, PQ-loop 2 spans alanine 138–leucine 194. Over leucine 153 to asparagine 164 the chain is Extracellular. The helical transmembrane segment at phenylalanine 165–glycine 185 threads the bilayer. Over asparagine 186–glycine 191 the chain is Cytoplasmic. Residues isoleucine 192–tryptophan 212 form a helical membrane-spanning segment. The Extracellular portion of the chain corresponds to tryptophan 213–valine 310. Residue serine 229 is modified to Phosphoserine. N-linked (GlcNAc...) asparagine glycosylation is found at asparagine 251 and asparagine 259.

It is found in the cell membrane. This is an uncharacterized protein from Saccharomyces cerevisiae (strain ATCC 204508 / S288c) (Baker's yeast).